We begin with the raw amino-acid sequence, 391 residues long: Ferrochelatase (391 aa).

Residues His196 and Glu281 each contribute to the Fe cation site.

This sequence belongs to the ferrochelatase family.

It is found in the cytoplasm. The catalysed reaction is heme b + 2 H(+) = protoporphyrin IX + Fe(2+). The protein operates within porphyrin-containing compound metabolism; protoheme biosynthesis; protoheme from protoporphyrin-IX: step 1/1. Functionally, catalyzes the ferrous insertion into protoporphyrin IX. The chain is Ferrochelatase from Synechococcus sp. (strain CC9311).